A 266-amino-acid chain; its full sequence is Tryptophan synthase alpha chain (266 aa).

Active-site proton acceptor residues include glutamate 51 and aspartate 62.

Belongs to the TrpA family. Tetramer of two alpha and two beta chains.

The enzyme catalyses (1S,2R)-1-C-(indol-3-yl)glycerol 3-phosphate + L-serine = D-glyceraldehyde 3-phosphate + L-tryptophan + H2O. The protein operates within amino-acid biosynthesis; L-tryptophan biosynthesis; L-tryptophan from chorismate: step 5/5. Functionally, the alpha subunit is responsible for the aldol cleavage of indoleglycerol phosphate to indole and glyceraldehyde 3-phosphate. The protein is Tryptophan synthase alpha chain of Thermosynechococcus vestitus (strain NIES-2133 / IAM M-273 / BP-1).